Here is a 415-residue protein sequence, read N- to C-terminus: L-cysteine:1D-myo-inositol 2-amino-2-deoxy-alpha-D-glucopyranoside ligase (415 aa).

Cysteine 43 contributes to the Zn(2+) binding site. Residues 43–46 (CGIT), threonine 58, and 81–83 (NVT) contribute to the L-cysteinyl-5'-AMP site. The 'HIGH' region signature appears at 45-55 (ITPYDATHLGH). A 'ERGGDP' region motif is present at residues 187–192 (ERGGDP). Tryptophan 227 provides a ligand contact to L-cysteinyl-5'-AMP. Cysteine 231 is a Zn(2+) binding site. 249-251 (GSD) contacts L-cysteinyl-5'-AMP. A Zn(2+)-binding site is contributed by histidine 256. Residue isoleucine 283 participates in L-cysteinyl-5'-AMP binding. Positions 289 to 293 (KMSKS) match the 'KMSKS' region motif.

It belongs to the class-I aminoacyl-tRNA synthetase family. MshC subfamily. In terms of assembly, monomer. Requires Zn(2+) as cofactor.

It catalyses the reaction 1D-myo-inositol 2-amino-2-deoxy-alpha-D-glucopyranoside + L-cysteine + ATP = 1D-myo-inositol 2-(L-cysteinylamino)-2-deoxy-alpha-D-glucopyranoside + AMP + diphosphate + H(+). Functionally, catalyzes the ATP-dependent condensation of GlcN-Ins and L-cysteine to form L-Cys-GlcN-Ins. The sequence is that of L-cysteine:1D-myo-inositol 2-amino-2-deoxy-alpha-D-glucopyranoside ligase from Saccharomonospora viridis (strain ATCC 15386 / DSM 43017 / JCM 3036 / CCUG 5913 / NBRC 12207 / NCIMB 9602 / P101) (Thermoactinomyces viridis).